The following is a 252-amino-acid chain: SPbeta prophage-derived uncharacterized protein YomH (252 aa).

The chain is SPbeta prophage-derived uncharacterized protein YomH (yomH) from Bacillus subtilis (strain 168).